The chain runs to 1207 residues: DNA-directed RNA polymerase subunit beta' (1207 aa).

4 residues coordinate Zn(2+): cysteine 60, cysteine 62, cysteine 75, and cysteine 78. Positions 450, 452, and 454 each coordinate Mg(2+). 4 residues coordinate Zn(2+): cysteine 819, cysteine 893, cysteine 900, and cysteine 903.

The protein belongs to the RNA polymerase beta' chain family. The RNAP catalytic core consists of 2 alpha, 1 beta, 1 beta' and 1 omega subunit. When a sigma factor is associated with the core the holoenzyme is formed, which can initiate transcription. It depends on Mg(2+) as a cofactor. Requires Zn(2+) as cofactor.

The enzyme catalyses RNA(n) + a ribonucleoside 5'-triphosphate = RNA(n+1) + diphosphate. Functionally, DNA-dependent RNA polymerase catalyzes the transcription of DNA into RNA using the four ribonucleoside triphosphates as substrates. This is DNA-directed RNA polymerase subunit beta' from Streptococcus pyogenes serotype M3 (strain ATCC BAA-595 / MGAS315).